We begin with the raw amino-acid sequence, 52 residues long: MAGNRSIITLECKTCKERNYTTTKNKKKTQDKLTLSKYCPRCRKHVEHKETK.

The protein belongs to the bacterial ribosomal protein bL33 family.

The protein is Large ribosomal subunit protein bL33 of Anaeromyxobacter dehalogenans (strain 2CP-C).